A 358-amino-acid chain; its full sequence is Type II restriction enzyme HpaII (358 aa).

Homodimer.

It carries out the reaction Endonucleolytic cleavage of DNA to give specific double-stranded fragments with terminal 5'-phosphates.. In terms of biological role, an E and P subtype restriction enzyme that recognizes the double-stranded sequence 5'-CCGG-3' and cleaves after C-1. The chain is Type II restriction enzyme HpaII from Haemophilus parainfluenzae.